The primary structure comprises 105 residues: Large ribosomal subunit protein uL18c (105 aa).

Belongs to the universal ribosomal protein uL18 family. Part of the 50S ribosomal subunit; contacts the 5S rRNA.

It localises to the plastid. Its subcellular location is the chloroplast. Binds 5S rRNA, forms part of the central protuberance of the 50S subunit. The protein is Large ribosomal subunit protein uL18c (rpl18) of Gracilaria tenuistipitata var. liui (Red alga).